The following is a 216-amino-acid chain: Acetate CoA-transferase subunit beta (216 aa).

Glu46 is a catalytic residue.

The protein belongs to the 3-oxoacid CoA-transferase subunit B family. As to quaternary structure, heterotetramer composed of two alpha subunits (AtoD) and two beta subunits (AtoA).

It is found in the cytoplasm. It catalyses the reaction an acyl-CoA + acetate = a carboxylate + acetyl-CoA. The catalysed reaction is acetoacetate + acetyl-CoA = acetoacetyl-CoA + acetate. It carries out the reaction butanoate + acetyl-CoA = butanoyl-CoA + acetate. The enzyme catalyses acetoacetate + butanoyl-CoA = acetoacetyl-CoA + butanoate. Its pathway is lipid metabolism; short-chain fatty acid metabolism. Inhibited by p-chloromercuribenzoate. In terms of biological role, coenzyme A transferase which is involved in short-chain fatty acid degradation and catalyzes the activation of short-chain fatty acids to their respective CoA thiolesters. During acetoacetate degradation, catalyzes the transfer of CoA from acetyl-CoA to acetoacetate by a mechanism involving a covalent enzyme-CoA compound as a reaction intermediate. Utilizes a variety of short chain acyl-CoA and carboxylic acid substrates but exhibits maximal activity with normal and 3-keto substrates. This Escherichia coli (strain K12) protein is Acetate CoA-transferase subunit beta.